Consider the following 944-residue polypeptide: 2-oxoglutarate dehydrogenase E1 component (944 aa).

A disordered region spans residues 915–944 (RRRSSPAEGDPTVHKKEQERIVSDSLTRKN). Over residues 925 to 936 (PTVHKKEQERIV) the composition is skewed to basic and acidic residues.

The protein belongs to the alpha-ketoglutarate dehydrogenase family. As to quaternary structure, homodimer. Part of the 2-oxoglutarate dehydrogenase (OGDH) complex composed of E1 (2-oxoglutarate dehydrogenase), E2 (dihydrolipoamide succinyltransferase) and E3 (dihydrolipoamide dehydrogenase); the complex contains multiple copies of the three enzymatic components (E1, E2 and E3). The cofactor is thiamine diphosphate.

The enzyme catalyses N(6)-[(R)-lipoyl]-L-lysyl-[protein] + 2-oxoglutarate + H(+) = N(6)-[(R)-S(8)-succinyldihydrolipoyl]-L-lysyl-[protein] + CO2. E1 component of the 2-oxoglutarate dehydrogenase (OGDH) complex which catalyzes the decarboxylation of 2-oxoglutarate, the first step in the conversion of 2-oxoglutarate to succinyl-CoA and CO(2). This Bacillus velezensis (strain DSM 23117 / BGSC 10A6 / LMG 26770 / FZB42) (Bacillus amyloliquefaciens subsp. plantarum) protein is 2-oxoglutarate dehydrogenase E1 component.